We begin with the raw amino-acid sequence, 293 residues long: Elongation factor Ts (293 aa).

Residues 79–82 are involved in Mg(2+) ion dislocation from EF-Tu; sequence TDFV.

This sequence belongs to the EF-Ts family.

The protein localises to the cytoplasm. In terms of biological role, associates with the EF-Tu.GDP complex and induces the exchange of GDP to GTP. It remains bound to the aminoacyl-tRNA.EF-Tu.GTP complex up to the GTP hydrolysis stage on the ribosome. The protein is Elongation factor Ts of Exiguobacterium sibiricum (strain DSM 17290 / CCUG 55495 / CIP 109462 / JCM 13490 / 255-15).